A 97-amino-acid chain; its full sequence is MKIGVVYALPSRQSWLSIDVPEGTTVKEAIQKSGILNQFPEIDLETQKVGIFGKAAALDAVVEEGARIEIYRPITVDPKTVKRRAAPEAPAAGGTES.

This sequence belongs to the UPF0125 (RnfH) family.

The sequence is that of Protein RnfH from Paramagnetospirillum magneticum (strain ATCC 700264 / AMB-1) (Magnetospirillum magneticum).